A 179-amino-acid chain; its full sequence is M-zodatoxin-Lt4b (179 aa).

A signal peptide spans 1–22 (MKFSIIALALAVAFVCVAESRS). Residues 23–43 (EEEGYDVSEEIQAEELEEAAR) constitute a propeptide that is removed on maturation. The Processing quadruplet motif 1 signature appears at 40–43 (EAAR). Gln-61 bears the Glutamine amide mark. Positions 63-66 (REDS) match the Inverted processing quadruplet motif 1 motif. A propeptide spanning residues 63–71 (REDSEDAGR) is cleaved from the precursor. The Processing quadruplet motif 2 signature appears at 68-71 (DAGR). Gln-89 bears the Glutamine amide mark. Positions 91-94 (REDT) match the Inverted processing quadruplet motif 2 motif. The propeptide occupies 91 to 99 (REDTEEAGR). The Processing quadruplet motif 3 motif lies at 96–99 (EAGR). The residue at position 117 (Gln-117) is a Glutamine amide. Positions 119 to 122 (REDS) match the Inverted processing quadruplet motif 3 motif. Positions 119–127 (REDSEEAGR) are excised as a propeptide. Positions 124-127 (EAGR) match the Processing quadruplet motif 4 motif. Position 145 is a glutamine amide (Gln-145). Positions 147 to 150 (REDT) match the Inverted processing quadruplet motif 4 motif. A propeptide spanning residues 147 to 154 (REDTEEAR) is cleaved from the precursor. The Processing quadruplet motif 5 motif lies at 151-154 (EEAR). Position 178 is a phenylalanine amide (Phe-178).

It belongs to the cationic peptide 03 (latarcin) family. 04 subfamily. In terms of processing, cleavage of the propeptide depends on the processing quadruplet motif (PQM) (XXXR, with at least one of X being E) and the inverted PQM (RXXX, with at least one of X being E). In terms of tissue distribution, expressed by the venom gland.

The protein localises to the secreted. M-zodatoxin-Lt4b: Has antimicrobial activity against Gram-positive bacteria (A.globiformis VKM Ac-1112 (MIC=0.3 uM), and B.subtilis VKM B-501 (MIC=1.1 uM)), Gram-negative bacteria (E.coli DH5-alpha (MIC=4.4 uM), E.coli MH1 (MIC=4.4 uM), and P.aeruginosa PAO1 (MIC=&gt;35 uM)), and yeasts (P.pastoris GS115 (MIC=&gt;35 uM), and S.cerevisiae Y190 (MIC=35 uM)). Does not have hemolytic activity against rabbit erythrocytes. Causes paralysis, but is not lethal when injected into insect (M.domestica) larvae. Its function is as follows. Shows no antimicrobial activity against Gram-positive bacterium B.subtilis B-501 or Gram-negative bacterium E.coli DH5-alpha at concentration up to 20 uM. This Lachesana tarabaevi (Spider) protein is M-zodatoxin-Lt4b.